The sequence spans 148 residues: Large ribosomal subunit protein bL9 (148 aa).

This sequence belongs to the bacterial ribosomal protein bL9 family.

Binds to the 23S rRNA. The chain is Large ribosomal subunit protein bL9 from Lachnoclostridium phytofermentans (strain ATCC 700394 / DSM 18823 / ISDg) (Clostridium phytofermentans).